A 302-amino-acid chain; its full sequence is Urease accessory protein UreD 1 (302 aa).

It belongs to the UreD family. As to quaternary structure, ureD, UreF and UreG form a complex that acts as a GTP-hydrolysis-dependent molecular chaperone, activating the urease apoprotein by helping to assemble the nickel containing metallocenter of UreC. The UreE protein probably delivers the nickel.

Its subcellular location is the cytoplasm. Required for maturation of urease via the functional incorporation of the urease nickel metallocenter. The sequence is that of Urease accessory protein UreD 1 from Psychrobacter cryohalolentis (strain ATCC BAA-1226 / DSM 17306 / VKM B-2378 / K5).